Reading from the N-terminus, the 80-residue chain is Peptide LaIT2 (80 aa).

The signal sequence occupies residues M1 to C21. In terms of domain architecture, BetaSPN-type CS-alpha/beta spans Q49–S80. Disulfide bonds link C52-C72, C59-C77, and C63-C79.

It belongs to the long chain scorpion toxin family. Class 2 subfamily. As to expression, expressed by the venom gland.

Its subcellular location is the secreted. Dual-function toxin that acts both as an insecticidal and an antimicrobial peptide. May inhibit voltage-gated potassium channels (Kv). This amphipathic peptide causes significant antimicrobial activity against E.coli (MIC=7 uM) but does not show any activity against S.aureus even at high concentration. In vivo, causes paralysis or death to crickets. This is Peptide LaIT2 from Liocheles australasiae (Dwarf wood scorpion).